The sequence spans 135 residues: ATP synthase epsilon chain (135 aa).

This sequence belongs to the ATPase epsilon chain family. F-type ATPases have 2 components, CF(1) - the catalytic core - and CF(0) - the membrane proton channel. CF(1) has five subunits: alpha(3), beta(3), gamma(1), delta(1), epsilon(1). CF(0) has three main subunits: a, b and c.

It localises to the cellular thylakoid membrane. Produces ATP from ADP in the presence of a proton gradient across the membrane. This Prochlorococcus marinus (strain NATL1A) protein is ATP synthase epsilon chain.